A 347-amino-acid polypeptide reads, in one-letter code: MFSSLFGVISNDIAIDLGTANTLIYQKGKGIVLNEPSVVALRNVGGRKVVHAVGIEAKQMLGRTPGHMEAIRPMRDGVIADFEVAEEMIKYFIRKVHNRKGFVNPKVIVCVPSGATAVERRAINDSCLNAGARRVGLIDEPMAAAIGAGLPIHEPTGSMVVDIGGGTTEVAVLSLSGIVYSRSVRVGGDKMDEAIISYMRRHHNLLIGETTAERIKKEIGTARAPADGEGLSIDVKGRDLMQGVPREVRISEKQAADALAEPVGQIVEAVKVALEATPPELASDIADKGIMLTGGGALLRGLDAEIRDHTGLPVTVADDPLSCVALGCGKVLEHPKWMKGVLESTLA.

Residues 19-21 (TAN), 165-167 (GGT), 213-216 (ERIK), and 295-298 (GGAL) each bind ATP.

Belongs to the FtsA/MreB family. As to quaternary structure, forms polymers in the presence of ATP. Forms pairs of protofilaments that adopt an antiparallel arrangement and bind to lipids.

Its subcellular location is the cytoplasm. In terms of biological role, forms membrane-associated dynamic filaments that are essential for cell shape determination. Acts by regulating cell wall synthesis and cell elongation, and thus cell shape. A feedback loop between cell geometry and MreB localization may maintain elongated cell shape by targeting cell wall growth to regions of negative cell wall curvature. Required for mid-cell peptidoglycan synthesis and cell division. Directs the localization of the cytosolic peptidoglycan precursor-synthesizing enzyme MurG. Also required for proper chromosome segregation. Directs the segregation of origin-proximal but not origin-distal loci. The protein is Cell shape-determining protein MreB of Caulobacter vibrioides (strain NA1000 / CB15N) (Caulobacter crescentus).